Reading from the N-terminus, the 235-residue chain is Ubiquinone biosynthesis O-methyltransferase (235 aa).

S-adenosyl-L-methionine-binding residues include Arg39, Gly59, Asp80, and Met124.

This sequence belongs to the methyltransferase superfamily. UbiG/COQ3 family.

It carries out the reaction a 3-demethylubiquinol + S-adenosyl-L-methionine = a ubiquinol + S-adenosyl-L-homocysteine + H(+). It catalyses the reaction a 3-(all-trans-polyprenyl)benzene-1,2-diol + S-adenosyl-L-methionine = a 2-methoxy-6-(all-trans-polyprenyl)phenol + S-adenosyl-L-homocysteine + H(+). Its pathway is cofactor biosynthesis; ubiquinone biosynthesis. Its function is as follows. O-methyltransferase that catalyzes the 2 O-methylation steps in the ubiquinone biosynthetic pathway. This Vibrio vulnificus (strain CMCP6) protein is Ubiquinone biosynthesis O-methyltransferase.